The sequence spans 283 residues: Pantothenate synthetase (283 aa).

30–37 contributes to the ATP binding site; the sequence is MGALHEGH. Catalysis depends on His-37, which acts as the Proton donor. Gln-61 contacts (R)-pantoate. Gln-61 is a binding site for beta-alanine. ATP is bound at residue 147–150; the sequence is GEKD. Residue Gln-153 coordinates (R)-pantoate. Residues Val-176 and 184–187 each bind ATP; that span reads VSSR.

This sequence belongs to the pantothenate synthetase family. As to quaternary structure, homodimer.

It is found in the cytoplasm. The enzyme catalyses (R)-pantoate + beta-alanine + ATP = (R)-pantothenate + AMP + diphosphate + H(+). The protein operates within cofactor biosynthesis; (R)-pantothenate biosynthesis; (R)-pantothenate from (R)-pantoate and beta-alanine: step 1/1. In terms of biological role, catalyzes the condensation of pantoate with beta-alanine in an ATP-dependent reaction via a pantoyl-adenylate intermediate. This chain is Pantothenate synthetase, found in Chlorobium luteolum (strain DSM 273 / BCRC 81028 / 2530) (Pelodictyon luteolum).